Here is a 78-residue protein sequence, read N- to C-terminus: Large ribosomal subunit protein bL28 (78 aa).

A disordered region spans residues 1–25 (MSRVCQVTGKRPTVGNNRSHARNAT).

It belongs to the bacterial ribosomal protein bL28 family.

In Alteromonas mediterranea (strain DSM 17117 / CIP 110805 / LMG 28347 / Deep ecotype), this protein is Large ribosomal subunit protein bL28.